The chain runs to 128 residues: Small ribosomal subunit protein uS11 (128 aa).

Belongs to the universal ribosomal protein uS11 family. In terms of assembly, part of the 30S ribosomal subunit. Interacts with proteins S7 and S18. Binds to IF-3.

Its function is as follows. Located on the platform of the 30S subunit, it bridges several disparate RNA helices of the 16S rRNA. Forms part of the Shine-Dalgarno cleft in the 70S ribosome. This chain is Small ribosomal subunit protein uS11, found in Aster yellows witches'-broom phytoplasma (strain AYWB).